Here is a 207-residue protein sequence, read N- to C-terminus: Chaperone protein TorD (207 aa).

This sequence belongs to the TorD/DmsD family. TorD subfamily.

It localises to the cytoplasm. Functionally, involved in the biogenesis of TorA. Acts on TorA before the insertion of the molybdenum cofactor and, as a result, probably favors a conformation of the apoenzyme that is competent for acquiring the cofactor. This chain is Chaperone protein TorD, found in Aggregatibacter aphrophilus (strain NJ8700) (Haemophilus aphrophilus).